Here is a 392-residue protein sequence, read N- to C-terminus: NADH-quinone oxidoreductase subunit D (392 aa).

The protein belongs to the complex I 49 kDa subunit family. NDH-1 is composed of 14 different subunits. Subunits NuoB, C, D, E, F, and G constitute the peripheral sector of the complex.

It is found in the cell inner membrane. It carries out the reaction a quinone + NADH + 5 H(+)(in) = a quinol + NAD(+) + 4 H(+)(out). In terms of biological role, NDH-1 shuttles electrons from NADH, via FMN and iron-sulfur (Fe-S) centers, to quinones in the respiratory chain. The immediate electron acceptor for the enzyme in this species is believed to be ubiquinone. Couples the redox reaction to proton translocation (for every two electrons transferred, four hydrogen ions are translocated across the cytoplasmic membrane), and thus conserves the redox energy in a proton gradient. The polypeptide is NADH-quinone oxidoreductase subunit D (Paramagnetospirillum magneticum (strain ATCC 700264 / AMB-1) (Magnetospirillum magneticum)).